The chain runs to 165 residues: Lipoprotein signal peptidase (165 aa).

3 consecutive transmembrane segments (helical) span residues 9 to 29 (FLAISFFVLIDWVSKLAVLLY), 69 to 89 (KYFLFAIRIAIILGILAFLFL), and 98 to 118 (IRFSLILLCSGAIGNVGDILF). Residues D124 and D142 contribute to the active site. A helical transmembrane segment spans residues 133 to 153 (WYFPTFNFADIFISLGTFIFV).

Belongs to the peptidase A8 family.

The protein localises to the cell inner membrane. It catalyses the reaction Release of signal peptides from bacterial membrane prolipoproteins. Hydrolyzes -Xaa-Yaa-Zaa-|-(S,diacylglyceryl)Cys-, in which Xaa is hydrophobic (preferably Leu), and Yaa (Ala or Ser) and Zaa (Gly or Ala) have small, neutral side chains.. It functions in the pathway protein modification; lipoprotein biosynthesis (signal peptide cleavage). Functionally, this protein specifically catalyzes the removal of signal peptides from prolipoproteins. The chain is Lipoprotein signal peptidase from Chlamydia caviae (strain ATCC VR-813 / DSM 19441 / 03DC25 / GPIC) (Chlamydophila caviae).